A 95-amino-acid chain; its full sequence is Large ribosomal subunit protein bL27 (95 aa).

The propeptide occupies 1–10 (MRFILNLQFF).

Belongs to the bacterial ribosomal protein bL27 family. The N-terminus is cleaved by ribosomal processing cysteine protease Prp.

The polypeptide is Large ribosomal subunit protein bL27 (Mesoplasma florum (strain ATCC 33453 / NBRC 100688 / NCTC 11704 / L1) (Acholeplasma florum)).